Reading from the N-terminus, the 406-residue chain is MAENGKNCDQRRIAMSKDQHNGSLTDPSSVHEKKRRDREERQNIVLWRQPLITLQYFSLETLVVLKEWTSKLWHRQSIVVSFLLLLAALVATYYVEGAHQQYVQRIEKQFLLYAYWIGLGILSSVGLGTGLHTFLLYLGPHIASVTLAAYECNSVNFPEPPYPDQIICPEEEGAEGAISLWSIISKVRIEACMWGIGTAIGELPPYFMARAARLSGAEPDDEEYQEFEEMLEHAEAAQDFASRAKLAVQKLVQKVGFFGILACASIPNPLFDLAGITCGHFLVPFWTFFGATLIGKAIIKMHIQKIFVIVTFSKHIVEQMVTFIGAVPGIGPSLQKPFQEYLEAQRQKLHHRSEAGTPQGENWLSWMFEKLVVAMVCYFVLSIINSMAQNYAKRIQQRLNSEEKTK.

Basic and acidic residues predominate over residues 1 to 20 (MAENGKNCDQRRIAMSKDQH). Residues 1–37 (MAENGKNCDQRRIAMSKDQHNGSLTDPSSVHEKKRRD) are disordered. A2 carries the N-acetylalanine modification. At 2-77 (AENGKNCDQR…WTSKLWHRQS (76 aa)) the chain is on the cytoplasmic side. The chain crosses the membrane as a helical span at residues 78–98 (IVVSFLLLLAALVATYYVEGA). Residues 99–109 (HQQYVQRIEKQ) are Extracellular-facing. Residues 110 to 130 (FLLYAYWIGLGILSSVGLGTG) form a helical membrane-spanning segment. Over 131-250 (LHTFLLYLGP…ASRAKLAVQK (120 aa)) the chain is Cytoplasmic. Positions 173 to 316 (GAEGAISLWS…FVIVTFSKHI (144 aa)) are VTT domain. Residues 251–271 (LVQKVGFFGILACASIPNPLF) traverse the membrane as a helical segment. At 272–273 (DL) the chain is on the extracellular side. The helical transmembrane segment at 274–294 (AGITCGHFLVPFWTFFGATLI) threads the bilayer. At 295 to 305 (GKAIIKMHIQK) the chain is on the cytoplasmic side. A helical transmembrane segment spans residues 306–326 (IFVIVTFSKHIVEQMVTFIGA). The Extracellular portion of the chain corresponds to 327–363 (VPGIGPSLQKPFQEYLEAQRQKLHHRSEAGTPQGENW). The chain crosses the membrane as a helical span at residues 364–384 (LSWMFEKLVVAMVCYFVLSII). Residues 385–406 (NSMAQNYAKRIQQRLNSEEKTK) lie on the Cytoplasmic side of the membrane.

It belongs to the VMP1 family. Interacts with BECN1. Interacts with TJP1. Interacts with TP53INP2. Interacts with TMEM41B. Interacts with ATP2A2, PLN and SLN; competes with PLN and SLN to prevent them from forming an inhibitory complex with ATP2A2. Interacts with ATG2A.

It localises to the endoplasmic reticulum-Golgi intermediate compartment membrane. Its subcellular location is the cell membrane. The protein localises to the vacuole membrane. It is found in the endoplasmic reticulum membrane. The catalysed reaction is a 1,2-diacyl-sn-glycero-3-phospho-L-serine(in) = a 1,2-diacyl-sn-glycero-3-phospho-L-serine(out). It catalyses the reaction cholesterol(in) = cholesterol(out). It carries out the reaction a 1,2-diacyl-sn-glycero-3-phosphocholine(in) = a 1,2-diacyl-sn-glycero-3-phosphocholine(out). The enzyme catalyses a 1,2-diacyl-sn-glycero-3-phosphoethanolamine(in) = a 1,2-diacyl-sn-glycero-3-phosphoethanolamine(out). Its function is as follows. Phospholipid scramblase involved in lipid homeostasis and membrane dynamics processes. Has phospholipid scramblase activity toward cholesterol and phosphatidylserine, as well as phosphatidylethanolamine and phosphatidylcholine. Required for autophagosome formation: participates in early stages of autophagosome biogenesis at the endoplasmic reticulum (ER) membrane by reequilibrating the leaflets of the ER as lipids are extracted by ATG2 (ATG2A or ATG2B) to mediate autophagosome assembly. Regulates ATP2A2 activity to control ER-isolation membrane contacts for autophagosome formation. In addition to autophagy, involved in other processes in which phospholipid scramblase activity is required. Modulates ER contacts with lipid droplets, mitochondria and endosomes. Plays an essential role in formation of cell junctions. Upon stress such as bacterial and viral infection, promotes formation of cytoplasmic vacuoles followed by cell death. Involved in the cytoplasmic vacuolization of acinar cells during the early stage of acute pancreatitis. In Mus musculus (Mouse), this protein is Vacuole membrane protein 1.